A 165-amino-acid chain; its full sequence is Ribosome maturation factor RimM (165 aa).

In terms of domain architecture, PRC barrel spans 90–161; it reads PDTYYVSDLK…KIIIKPVGEW (72 aa).

This sequence belongs to the RimM family. As to quaternary structure, binds ribosomal protein uS19.

It is found in the cytoplasm. Its function is as follows. An accessory protein needed during the final step in the assembly of 30S ribosomal subunit, possibly for assembly of the head region. Essential for efficient processing of 16S rRNA. May be needed both before and after RbfA during the maturation of 16S rRNA. It has affinity for free ribosomal 30S subunits but not for 70S ribosomes. In Clostridium beijerinckii (strain ATCC 51743 / NCIMB 8052) (Clostridium acetobutylicum), this protein is Ribosome maturation factor RimM.